A 162-amino-acid polypeptide reads, in one-letter code: Mitochondrial intermembrane space import and assembly protein 40 homolog (162 aa).

Positions 1-61 (MGQAQSDENS…DNENESLEAK (61 aa)) are disordered. The span at 9 to 18 (NSIPTTTTTN) shows a compositional bias: low complexity. 3 disulfides stabilise this stretch: C68–C70, C79–C112, and C89–C102. A CHCH domain is found at 76–120 (NGSCGSQFSEAFLCFLKSTAEEKGSDCVNPFVALQSCINANPDAF). 2 short sequence motifs (cx9C motif) span residues 79-89 (CGSQFSEAFLC) and 102-112 (CVNPFVALQSC). A disordered region spans residues 119–162 (AFSKSVTGDEKETEKKEEQPPVQDHRIIPPLWAKDPPRSGNSKL). The span at 125-145 (TGDEKETEKKEEQPPVQDHRI) shows a compositional bias: basic and acidic residues.

It is found in the mitochondrion intermembrane space. It localises to the peroxisome matrix. Required for the import and folding of small cysteine-containing proteins in the mitochondrial intermembrane space. Involved in the mitochondrial oxidative folding of the copper-zinc superoxide dismutase CSD1, the copper chaperone for superoxide dismutase CCS, and subunits of the mitochondrial membrane respiratory chain NADH dehydrogenase (Complex I). Involved in the peroxisomal oxidative folding of the copper-zinc superoxide dismutase CSD3, and the fatty acid beta-oxidation multifunctional protein AIM1. This chain is Mitochondrial intermembrane space import and assembly protein 40 homolog, found in Arabidopsis thaliana (Mouse-ear cress).